The following is a 341-amino-acid chain: UDP-N-acetyl-alpha-D-glucosaminouronate 4-epimerase (341 aa).

Positions 27, 28, 47, 50, 51, 52, 78, 79, and 98 each coordinate NAD(+). Ser-103 lines the UDP-N-acetyl-alpha-D-galactosamine pocket. Thr-117 is a binding site for NAD(+). UDP-N-acetyl-alpha-D-galactosamine contacts are provided by Ser-142, Ser-143, and Tyr-166. Residues Tyr-166 and Lys-170 each coordinate NAD(+). Tyr-166 serves as the catalytic Proton acceptor. Asn-195 is a binding site for UDP-N-acetyl-alpha-D-galactosamine. Val-196 lines the NAD(+) pocket. The UDP-N-acetyl-alpha-D-galactosamine site is built by Val-210, Tyr-225, Asn-227, Arg-234, Arg-299, and Asp-302.

This sequence belongs to the NAD(P)-dependent epimerase/dehydratase family. As to quaternary structure, homodimer. NAD(+) is required as a cofactor.

The enzyme catalyses UDP-2-acetamido-2-deoxy-alpha-D-glucuronate = UDP-2-acetamido-2-deoxy-alpha-D-galacturonate. It catalyses the reaction UDP-N-acetyl-alpha-D-glucosamine = UDP-N-acetyl-alpha-D-galactosamine. It functions in the pathway bacterial outer membrane biogenesis; LPS O-antigen biosynthesis. Functionally, epimerase required for the biosynthesis of the B-band O antigen of serotype O6 lipopolysaccharide. Catalyzes the reversible epimerization of UDP-N-acetylglucosaminuronic acid (UDP-GlcNAcA) to UDP-N-acetylgalactosaminuronic acid (UDP-GalNAcA). Also catalyzes the reversible epimerization of UDP-N-acetylglucosamine (UDP-GlcNAc) to UDP-N-acetylgalactosamine (UDP-GalNAc). Has very low epimerase activity with UDP-glucose (UDP-Glc) and UDP-galactose (UDP-Gal). The polypeptide is UDP-N-acetyl-alpha-D-glucosaminouronate 4-epimerase (Pseudomonas aeruginosa).